We begin with the raw amino-acid sequence, 264 residues long: S-adenosylmethionine decarboxylase proenzyme (264 aa).

The active-site Schiff-base intermediate with substrate; via pyruvic acid is the Ser-112. Pyruvic acid (Ser); by autocatalysis is present on Ser-112. His-117 (proton acceptor; for processing activity) is an active-site residue. Cys-140 acts as the Proton donor; for catalytic activity in catalysis.

It belongs to the prokaryotic AdoMetDC family. Type 2 subfamily. In terms of assembly, heterooctamer of four alpha and four beta chains arranged as a tetramer of alpha/beta heterodimers. The cofactor is pyruvate. Is synthesized initially as an inactive proenzyme. Formation of the active enzyme involves a self-maturation process in which the active site pyruvoyl group is generated from an internal serine residue via an autocatalytic post-translational modification. Two non-identical subunits are generated from the proenzyme in this reaction, and the pyruvate is formed at the N-terminus of the alpha chain, which is derived from the carboxyl end of the proenzyme. The post-translation cleavage follows an unusual pathway, termed non-hydrolytic serinolysis, in which the side chain hydroxyl group of the serine supplies its oxygen atom to form the C-terminus of the beta chain, while the remainder of the serine residue undergoes an oxidative deamination to produce ammonia and the pyruvoyl group blocking the N-terminus of the alpha chain.

The enzyme catalyses S-adenosyl-L-methionine + H(+) = S-adenosyl 3-(methylsulfanyl)propylamine + CO2. The protein operates within amine and polyamine biosynthesis; S-adenosylmethioninamine biosynthesis; S-adenosylmethioninamine from S-adenosyl-L-methionine: step 1/1. Its function is as follows. Catalyzes the decarboxylation of S-adenosylmethionine to S-adenosylmethioninamine (dcAdoMet), the propylamine donor required for the synthesis of the polyamines spermine and spermidine from the diamine putrescine. The sequence is that of S-adenosylmethionine decarboxylase proenzyme from Salmonella choleraesuis (strain SC-B67).